The chain runs to 569 residues: Adenine deaminase 1 (569 aa).

This sequence belongs to the metallo-dependent hydrolases superfamily. Adenine deaminase family. It depends on Mn(2+) as a cofactor.

The catalysed reaction is adenine + H2O + H(+) = hypoxanthine + NH4(+). This is Adenine deaminase 1 from Rhizobium johnstonii (strain DSM 114642 / LMG 32736 / 3841) (Rhizobium leguminosarum bv. viciae).